Here is a 201-residue protein sequence, read N- to C-terminus: Small ribosomal subunit protein uS4 (201 aa).

In terms of domain architecture, S4 RNA-binding spans 92-155; the sequence is ARLDNVVFRL…KSLEVIANSL (64 aa).

It belongs to the universal ribosomal protein uS4 family. Part of the 30S ribosomal subunit. Contacts protein S5. The interaction surface between S4 and S5 is involved in control of translational fidelity.

Its function is as follows. One of the primary rRNA binding proteins, it binds directly to 16S rRNA where it nucleates assembly of the body of the 30S subunit. Functionally, with S5 and S12 plays an important role in translational accuracy. The sequence is that of Small ribosomal subunit protein uS4 from Phocaeicola vulgatus (strain ATCC 8482 / DSM 1447 / JCM 5826 / CCUG 4940 / NBRC 14291 / NCTC 11154) (Bacteroides vulgatus).